Consider the following 110-residue polypeptide: QAVVTQESALTTSPGETVTLTCRSNTGAVTTSNYANWVQQKPDHLFTGLIGNTNNRAPGVPARFSGSLIGNKAALTITGAQTEDEAIYFCALWYSNRWVFGGGTKLTVLG.

Residues 1 to 106 (QAVVTQESAL…RWVFGGGTKL (106 aa)) form the Ig-like domain.

This is Ig lambda-1 chain V region S178 from Mus musculus (Mouse).